The following is a 286-amino-acid chain: Fructose-bisphosphate aldolase (286 aa).

Residue Ser-50 coordinates D-glyceraldehyde 3-phosphate. Asp-85 serves as the catalytic Proton donor. The Zn(2+) site is built by His-86, Asp-107, Glu-137, and His-181. Gly-182 lines the dihydroxyacetone phosphate pocket. His-209 contributes to the Zn(2+) binding site. Dihydroxyacetone phosphate is bound by residues 210-212 and 231-234; these read GGT and NVNT.

Belongs to the class II fructose-bisphosphate aldolase family. Zn(2+) is required as a cofactor.

It carries out the reaction beta-D-fructose 1,6-bisphosphate = D-glyceraldehyde 3-phosphate + dihydroxyacetone phosphate. It participates in carbohydrate degradation; glycolysis; D-glyceraldehyde 3-phosphate and glycerone phosphate from D-glucose: step 4/4. Its function is as follows. Catalyzes the aldol condensation of dihydroxyacetone phosphate (DHAP or glycerone-phosphate) with glyceraldehyde 3-phosphate (G3P) to form fructose 1,6-bisphosphate (FBP) in gluconeogenesis and the reverse reaction in glycolysis. This Staphylococcus epidermidis (strain ATCC 35984 / DSM 28319 / BCRC 17069 / CCUG 31568 / BM 3577 / RP62A) protein is Fructose-bisphosphate aldolase (fba).